The primary structure comprises 151 residues: Nascent polypeptide-associated complex subunit beta (151 aa).

The 66-residue stretch at 32–97 (EQDDTKLMEA…PQEKDVTQLI (66 aa)) folds into the NAC-A/B domain. Positions 122–151 (GKTPSMGGENAGADEDIPDLIEGQKFDEVE) are disordered.

Belongs to the NAC-beta family. Part of the nascent polypeptide-associated complex (NAC), consisting of EGD2 and EGD1. NAC associates with ribosomes via EGD1.

The protein localises to the cytoplasm. It is found in the nucleus. In terms of biological role, component of the nascent polypeptide-associated complex (NAC), a dynamic component of the ribosomal exit tunnel, protecting the emerging polypeptides from interaction with other cytoplasmic proteins to ensure appropriate nascent protein targeting. The NAC complex also promotes mitochondrial protein import by enhancing productive ribosome interactions with the outer mitochondrial membrane and blocks the inappropriate interaction of ribosomes translating non-secretory nascent polypeptides with translocation sites in the membrane of the endoplasmic reticulum. EGD1 may act as a transcription factor that exert a negative effect on the expression of several genes that are transcribed by RNA polymerase II. The polypeptide is Nascent polypeptide-associated complex subunit beta (EGD1) (Meyerozyma guilliermondii (strain ATCC 6260 / CBS 566 / DSM 6381 / JCM 1539 / NBRC 10279 / NRRL Y-324) (Yeast)).